Here is a 64-residue protein sequence, read N- to C-terminus: Large ribosomal subunit protein uL29 (64 aa).

This sequence belongs to the universal ribosomal protein uL29 family.

The polypeptide is Large ribosomal subunit protein uL29 (Verminephrobacter eiseniae (strain EF01-2)).